A 478-amino-acid polypeptide reads, in one-letter code: MELEKRIYVGGLSSSIESSDLESRFSRFGSVSNLEIINKSTPVGTIQRFAYLNFRTDEDKWQKCKSYLSNATFKGSKLRIEEARPYYLVKLQQEKKIADLQSTNNDEKNEDHSSKVDLEDPVFHGEIIVPGKHSKNMQVVTDSDVRKDPPRKGWKKGPYGRAIVVLRMYNKNTKKTRFFYPLGKNCLQKLWGRVETNMDNTTAFYDSDHDEYVSYGGKRASRDKIRMQAKLGIKASTQKDDNDFELLNNTTGEIEVTKELNEEQLDALRKKDKDTAASVLAELFGSENTEEIDTVSKTSGVLELDNDSTNNFQKEGLDEQDNLQKEESVHIDVPAEFEAFDERTAVVNVDNLKEMFSSNAQDTSKFSLFGNENGVGEESEMESEIDDRNYETMEEEADGETPLAIVKASSGTKGWPKMFTLPNPSSLFQPGNEDYTSREALESWWSENRLFLTRDYKRKRKDAVKRQRRAHEKRIRLV.

The 81-residue stretch at 5–85 (KRIYVGGLSS…SKLRIEEARP (81 aa)) folds into the RRM domain. 2 positions are modified to phosphoserine: Ser207 and Ser308.

It is found in the nucleus. The protein localises to the nucleolus. This is an uncharacterized protein from Schizosaccharomyces pombe (strain 972 / ATCC 24843) (Fission yeast).